Consider the following 120-residue polypeptide: NAD(P)H-quinone oxidoreductase subunit 3 (120 aa).

3 helical membrane-spanning segments follow: residues 2-22, 64-84, and 89-109; these read FVLTGYEYFLGFLFICSLVPV, MFALVFVVFDVETVFLYPWAV, and LGLLAFVEALIFIAILVVALV.

The protein belongs to the complex I subunit 3 family. NDH-1 can be composed of about 15 different subunits; different subcomplexes with different compositions have been identified which probably have different functions.

Its subcellular location is the cellular thylakoid membrane. It catalyses the reaction a plastoquinone + NADH + (n+1) H(+)(in) = a plastoquinol + NAD(+) + n H(+)(out). The catalysed reaction is a plastoquinone + NADPH + (n+1) H(+)(in) = a plastoquinol + NADP(+) + n H(+)(out). NDH-1 shuttles electrons from an unknown electron donor, via FMN and iron-sulfur (Fe-S) centers, to quinones in the respiratory and/or the photosynthetic chain. The immediate electron acceptor for the enzyme in this species is believed to be plastoquinone. Couples the redox reaction to proton translocation, and thus conserves the redox energy in a proton gradient. Cyanobacterial NDH-1 also plays a role in inorganic carbon-concentration. The protein is NAD(P)H-quinone oxidoreductase subunit 3 (ndhC) of Synechocystis sp. (strain ATCC 27184 / PCC 6803 / Kazusa).